Consider the following 429-residue polypeptide: Glycine betaine monooxygenase oxygenase subunit (429 aa).

A Rieske domain is found at 56-163 (WLIAGMTCEI…VKTAGGYIFI (108 aa)). [2Fe-2S] cluster-binding residues include Cys-98, His-100, Cys-118, and His-121. Positions 217 and 222 each coordinate Fe cation.

It belongs to the bacterial ring-hydroxylating dioxygenase alpha subunit family. In terms of assembly, the system is composed of an oxygenase subunit (GbcA) and a reductase subunit (GbcB). [2Fe-2S] cluster serves as cofactor. Fe cation is required as a cofactor.

It carries out the reaction glycine betaine + NADH + O2 + H(+) = N,N-dimethylglycine + formaldehyde + NAD(+) + H2O. Functionally, involved in degradation of glycine betaine. Part of a Rieske-type oxygenase system that catalyzes the conversion of glycine betaine (GB) to dimethylglycine (DMG). This subunit is the terminal oxygenase component of the system. The protein is Glycine betaine monooxygenase oxygenase subunit of Pseudomonas aeruginosa (strain UCBPP-PA14).